We begin with the raw amino-acid sequence, 117 residues long: Large ribosomal subunit protein uL24 (117 aa).

This sequence belongs to the universal ribosomal protein uL24 family. As to quaternary structure, part of the 50S ribosomal subunit.

Functionally, one of two assembly initiator proteins, it binds directly to the 5'-end of the 23S rRNA, where it nucleates assembly of the 50S subunit. Its function is as follows. Located at the polypeptide exit tunnel on the outside of the subunit. This Methanothermobacter thermautotrophicus (strain ATCC 29096 / DSM 1053 / JCM 10044 / NBRC 100330 / Delta H) (Methanobacterium thermoautotrophicum) protein is Large ribosomal subunit protein uL24.